We begin with the raw amino-acid sequence, 59 residues long: Large ribosomal subunit protein eL29 (59 aa).

Residues 1–26 (MAKSKNHTAHNQTRKAHRNGIKKPKT) are compositionally biased toward basic residues. The tract at residues 1-37 (MAKSKNHTAHNQTRKAHRNGIKKPKTYKYPSLKGVDP) is disordered. Lys-52 participates in a covalent cross-link: Glycyl lysine isopeptide (Lys-Gly) (interchain with G-Cter in ubiquitin).

The protein belongs to the eukaryotic ribosomal protein eL29 family. Component of the large ribosomal subunit (LSU). Mature yeast ribosomes consist of a small (40S) and a large (60S) subunit. The 40S small subunit contains 1 molecule of ribosomal RNA (18S rRNA) and 33 different proteins (encoded by 57 genes). The large 60S subunit contains 3 rRNA molecules (25S, 5.8S and 5S rRNA) and 46 different proteins (encoded by 81 genes).

The protein localises to the cytoplasm. In terms of biological role, component of the ribosome, a large ribonucleoprotein complex responsible for the synthesis of proteins in the cell. The small ribosomal subunit (SSU) binds messenger RNAs (mRNAs) and translates the encoded message by selecting cognate aminoacyl-transfer RNA (tRNA) molecules. The large subunit (LSU) contains the ribosomal catalytic site termed the peptidyl transferase center (PTC), which catalyzes the formation of peptide bonds, thereby polymerizing the amino acids delivered by tRNAs into a polypeptide chain. The nascent polypeptides leave the ribosome through a tunnel in the LSU and interact with protein factors that function in enzymatic processing, targeting, and the membrane insertion of nascent chains at the exit of the ribosomal tunnel. This Saccharomyces cerevisiae (strain ATCC 204508 / S288c) (Baker's yeast) protein is Large ribosomal subunit protein eL29.